Reading from the N-terminus, the 163-residue chain is Putative 4-hydroxy-4-methyl-2-oxoglutarate aldolase (163 aa).

Substrate is bound by residues 76–79 (GDML) and R98. Residue D99 coordinates a divalent metal cation.

It belongs to the class II aldolase/RraA-like family. In terms of assembly, homotrimer. A divalent metal cation is required as a cofactor.

The enzyme catalyses 4-hydroxy-4-methyl-2-oxoglutarate = 2 pyruvate. The catalysed reaction is oxaloacetate + H(+) = pyruvate + CO2. In terms of biological role, catalyzes the aldol cleavage of 4-hydroxy-4-methyl-2-oxoglutarate (HMG) into 2 molecules of pyruvate. Also contains a secondary oxaloacetate (OAA) decarboxylase activity due to the common pyruvate enolate transition state formed following C-C bond cleavage in the retro-aldol and decarboxylation reactions. This chain is Putative 4-hydroxy-4-methyl-2-oxoglutarate aldolase, found in Pseudomonas fluorescens (strain ATCC BAA-477 / NRRL B-23932 / Pf-5).